The sequence spans 518 residues: Pre-glycoprotein polyprotein GP complex (518 aa).

Residue Gly-2 is the site of N-myristoyl glycine; by host attachment. The Extracellular portion of the chain corresponds to 2–17 (GQVIGFFQSLPNIINE). Residues 18–33 (ALNIALICVALIAILK) form a helical membrane-spanning segment. At 34–58 (GIVNIWKSGLIQLFIFLILAGRSCS) the chain is on the cytoplasmic side. Position 57 (Cys-57) interacts with Zn(2+). The Extracellular portion of the chain corresponds to 59-456 (HTFQIGRNHE…QGSTPLSLVD (398 aa)). Intrachain disulfides connect Cys-87/Cys-258, Cys-303/Cys-316, Cys-325/Cys-334, and Cys-388/Cys-409. Asn-90, Asn-112, Asn-127, Asn-180, and Asn-251 each carry an N-linked (GlcNAc...) asparagine; by host glycan. Asn-389, Asn-397, Asn-414, and Asn-419 each carry an N-linked (GlcNAc...) asparagine; by host glycan. A helical transmembrane segment spans residues 457-477 (LCFWSTLFYVTTLFAHLVGFP). The Cytoplasmic portion of the chain corresponds to 478 to 518 (THRHILDGPCPKPHRLTKKGICSCGHFGIPGKPVRWVKRSR). Residues His-479, His-481, Cys-487, His-491, Cys-499, and Cys-501 each contribute to the Zn(2+) site.

Belongs to the arenaviridae GPC protein family. As to quaternary structure, interacts with glycoprotein G2. Part of the GP complex (GP-C) together with glycoprotein G1 and glycoprotein G2. The GP-complex interacts with protein Z, which interacts with ribonucleocapsid; these interactions may induce virion budding. In terms of assembly, homotrimer; disulfide-linked. In pre-fusion state, G1 homotrimers bind G2 homotrimers via ionic interactions. Part of the GP complex (GP-C) together with glycoprotein G2 and the stable signal peptide. The GP-complex interacts with protein Z, which interacts with ribonucleocapsid; these interactions may induce virion budding. Homotrimer. Interacts with the stable signal peptide. In pre-fusion state, G2 homotrimers bind G1 homotrimers via ionic interactions. Part of the GP complex (GP-C) together with glycoprotein G1 and the stable signal peptide. Acidification in the endosome triggers rearrangements, which ultimately leads to a 6 helix bundle formed by the two heptad repeat domains (HR1 and HR2) in post-fusion state. The GP-complex interacts with protein Z, which interacts with ribonucleocapsid; these interactions may induce virion budding. In terms of processing, specific enzymatic cleavages in vivo yield mature proteins. GP-C polyprotein is cleaved in the endoplasmic reticulum by the host protease MBTPS1. Only cleaved glycoprotein is incorporated into virions. The SSP remains stably associated with the GP complex following cleavage by signal peptidase and plays crucial roles in the trafficking of GP through the secretory pathway. Post-translationally, myristoylation is necessary for GP2-mediated fusion activity.

The protein resides in the virion membrane. It is found in the host endoplasmic reticulum membrane. Its subcellular location is the host Golgi apparatus membrane. It localises to the host cell membrane. In terms of biological role, functions as a cleaved signal peptide that is retained as the third component of the GP complex (GP-C). Helps to stabilize the spike complex in its native conformation. The SSP is required for efficient glycoprotein expression, post-translational maturation cleavage of G1 and G2, glycoprotein transport to the cell surface plasma membrane, formation of infectious virus particles, and acid pH-dependent glycoprotein-mediated cell fusion. Functionally, forms the virion spikes together with glycoprotein G2. The glycoprotein spike trimers are connected to the underlying matrix. Mediates virus attachment to host receptor alpha-dystroglycan DAG1. This attachment induces virion internalization predominantly through clathrin- and caveolin-independent endocytosis. Forms the virion spikes together with glycoprotein G1. The glycoprotein spike trimers are connected to the underlying matrix. Class I viral fusion protein that directs fusion of viral and host endosomal membranes, leading to delivery of the nucleocapsid into the cytoplasm. Membrane fusion is mediated by irreversible conformational changes induced by acidification. This Bolomys (OLVV) protein is Pre-glycoprotein polyprotein GP complex.